Consider the following 371-residue polypeptide: Alanine racemase (371 aa).

The active-site Proton acceptor; specific for D-alanine is the Lys35. At Lys35 the chain carries N6-(pyridoxal phosphate)lysine. Residue Arg130 participates in substrate binding. The Proton acceptor; specific for L-alanine role is filled by Tyr256. Met304 serves as a coordination point for substrate.

It belongs to the alanine racemase family. Pyridoxal 5'-phosphate serves as cofactor.

The catalysed reaction is L-alanine = D-alanine. Its pathway is amino-acid biosynthesis; D-alanine biosynthesis; D-alanine from L-alanine: step 1/1. Functionally, catalyzes the interconversion of L-alanine and D-alanine. May also act on other amino acids. The protein is Alanine racemase (alr) of Verminephrobacter eiseniae (strain EF01-2).